The sequence spans 153 residues: uncharacterized protein (153 aa).

A signal peptide spans 1–25 (MKKRQYLKSLYVALLGTLCYLSVNA).

This is an uncharacterized protein from Pasteurella multocida (strain Pm70).